A 277-amino-acid polypeptide reads, in one-letter code: Phosphate import ATP-binding protein PstB (277 aa).

Residues 31-272 enclose the ABC transporter domain; it reads IEVPGLSLYY…PAKKQTEDYI (242 aa). 63-70 contacts ATP; it reads GPSGCGKS.

The protein belongs to the ABC transporter superfamily. Phosphate importer (TC 3.A.1.7) family. As to quaternary structure, the complex is composed of two ATP-binding proteins (PstB), two transmembrane proteins (PstC and PstA) and a solute-binding protein (PstS).

It localises to the cell inner membrane. The catalysed reaction is phosphate(out) + ATP + H2O = ADP + 2 phosphate(in) + H(+). Functionally, part of the ABC transporter complex PstSACB involved in phosphate import. Responsible for energy coupling to the transport system. The polypeptide is Phosphate import ATP-binding protein PstB (Pseudomonas fluorescens (strain ATCC BAA-477 / NRRL B-23932 / Pf-5)).